Here is a 43-residue protein sequence, read N- to C-terminus: Protein PsbN (43 aa).

Residues 7–27 (ITIFLSCFLVGVTGYALYTAF) form a helical membrane-spanning segment.

Belongs to the PsbN family.

Its subcellular location is the plastid. It is found in the chloroplast thylakoid membrane. Its function is as follows. May play a role in photosystem I and II biogenesis. The protein is Protein PsbN of Klebsormidium bilatum (Filamentous green alga).